Consider the following 378-residue polypeptide: uncharacterized protein (378 aa).

Basic residues predominate over residues 1 to 11 (MSPMNRQRKNK). Residues 1 to 23 (MSPMNRQRKNKSNVLNEKDERPG) are disordered.

This is an uncharacterized protein from Caenorhabditis elegans.